A 211-amino-acid chain; its full sequence is Ribonuclease T (211 aa).

Residues 24-198 form the Exonuclease domain; that stretch reads VVVDVETGGF…YDAEKTAHLF (175 aa). Mg(2+)-binding residues include D27, E29, H185, and D190. Catalysis depends on H185, which acts as the Proton donor/acceptor.

This sequence belongs to the RNase T family. Homodimer. The cofactor is Mg(2+).

Functionally, trims short 3' overhangs of a variety of RNA species, leaving a one or two nucleotide 3' overhang. Responsible for the end-turnover of tRNA: specifically removes the terminal AMP residue from uncharged tRNA (tRNA-C-C-A). Also appears to be involved in tRNA biosynthesis. The chain is Ribonuclease T from Xylella fastidiosa (strain 9a5c).